The chain runs to 185 residues: Ribosome-recycling factor (185 aa).

It belongs to the RRF family.

The protein resides in the cytoplasm. Its function is as follows. Responsible for the release of ribosomes from messenger RNA at the termination of protein biosynthesis. May increase the efficiency of translation by recycling ribosomes from one round of translation to another. This Bacillus cereus (strain B4264) protein is Ribosome-recycling factor.